Consider the following 473-residue polypeptide: Glutamine synthetase (473 aa).

Residues 18-102 (NNIKWVDLQF…VLTKVFWGGG (85 aa)) enclose the GS beta-grasp domain. The GS catalytic domain maps to 110–473 (PRGIAEEAEK…PMEIYQYLDS (364 aa)). Residues E133 and E135 each coordinate Mg(2+). Position 207 (E207) interacts with ATP. Residues E212 and E220 each contribute to the Mg(2+) site. L-glutamate contacts are provided by residues 264–265 (NG) and G265. A Mg(2+)-binding site is contributed by H269. ATP is bound by residues 271-273 (HFS) and S273. The L-glutamate site is built by R324, E330, and R342. The ATP site is built by R342, R347, and K357. Residue E362 participates in Mg(2+) binding. R364 provides a ligand contact to L-glutamate.

Belongs to the glutamine synthetase family. Oligomer of 12 subunits arranged in the form of two hexagons. Mg(2+) serves as cofactor. Requires Mn(2+) as cofactor.

It is found in the cytoplasm. The catalysed reaction is L-glutamate + NH4(+) + ATP = L-glutamine + ADP + phosphate + H(+). With respect to regulation, strongly inhibited by glycine and L-alanine. AMP at 10 mM displays a very weak inhibitory effect. The activity of this enzyme is not controlled by adenylation. Functionally, probably involved in nitrogen metabolism via ammonium assimilation. Catalyzes the ATP-dependent biosynthesis of glutamine from glutamate and ammonia. The polypeptide is Glutamine synthetase (Sulfolobus acidocaldarius (strain ATCC 33909 / DSM 639 / JCM 8929 / NBRC 15157 / NCIMB 11770)).